A 185-amino-acid polypeptide reads, in one-letter code: Elongation factor P (185 aa).

Belongs to the elongation factor P family.

It is found in the cytoplasm. It participates in protein biosynthesis; polypeptide chain elongation. Its function is as follows. Involved in peptide bond synthesis. Stimulates efficient translation and peptide-bond synthesis on native or reconstituted 70S ribosomes in vitro. Probably functions indirectly by altering the affinity of the ribosome for aminoacyl-tRNA, thus increasing their reactivity as acceptors for peptidyl transferase. In Lachnoclostridium phytofermentans (strain ATCC 700394 / DSM 18823 / ISDg) (Clostridium phytofermentans), this protein is Elongation factor P.